Here is a 192-residue protein sequence, read N- to C-terminus: Peptidyl-tRNA hydrolase (192 aa).

The active-site Proton acceptor is the His-19. TRNA-binding residues include Tyr-64, Asn-66, and Asn-112.

It belongs to the PTH family. In terms of assembly, monomer.

It is found in the cytoplasm. The catalysed reaction is an N-acyl-L-alpha-aminoacyl-tRNA + H2O = an N-acyl-L-amino acid + a tRNA + H(+). Its function is as follows. Hydrolyzes ribosome-free peptidyl-tRNAs (with 1 or more amino acids incorporated), which drop off the ribosome during protein synthesis, or as a result of ribosome stalling. Catalyzes the release of premature peptidyl moieties from peptidyl-tRNA molecules trapped in stalled 50S ribosomal subunits, and thus maintains levels of free tRNAs and 50S ribosomes. The sequence is that of Peptidyl-tRNA hydrolase from Acidiphilium cryptum (strain JF-5).